The chain runs to 404 residues: Cysteine desulfurase IscS (404 aa).

Pyridoxal 5'-phosphate-binding positions include 75–76, Asn-155, Gln-183, and 203–205; these read AT and SAH. Residue Lys-206 is modified to N6-(pyridoxal phosphate)lysine. Thr-243 lines the pyridoxal 5'-phosphate pocket. Cys-328 serves as the catalytic Cysteine persulfide intermediate. Cys-328 contributes to the [2Fe-2S] cluster binding site.

It belongs to the class-V pyridoxal-phosphate-dependent aminotransferase family. NifS/IscS subfamily. In terms of assembly, homodimer. Forms a heterotetramer with IscU, interacts with other sulfur acceptors. Pyridoxal 5'-phosphate is required as a cofactor.

It localises to the cytoplasm. It catalyses the reaction (sulfur carrier)-H + L-cysteine = (sulfur carrier)-SH + L-alanine. The protein operates within cofactor biosynthesis; iron-sulfur cluster biosynthesis. Functionally, master enzyme that delivers sulfur to a number of partners involved in Fe-S cluster assembly, tRNA modification or cofactor biosynthesis. Catalyzes the removal of elemental sulfur atoms from cysteine to produce alanine. Functions as a sulfur delivery protein for Fe-S cluster synthesis onto IscU, an Fe-S scaffold assembly protein, as well as other S acceptor proteins. The polypeptide is Cysteine desulfurase IscS (Photorhabdus laumondii subsp. laumondii (strain DSM 15139 / CIP 105565 / TT01) (Photorhabdus luminescens subsp. laumondii)).